A 188-amino-acid chain; its full sequence is Elongation factor P (188 aa).

This sequence belongs to the elongation factor P family.

The protein resides in the cytoplasm. Its pathway is protein biosynthesis; polypeptide chain elongation. Its function is as follows. Involved in peptide bond synthesis. Stimulates efficient translation and peptide-bond synthesis on native or reconstituted 70S ribosomes in vitro. Probably functions indirectly by altering the affinity of the ribosome for aminoacyl-tRNA, thus increasing their reactivity as acceptors for peptidyl transferase. This Methylobacterium sp. (strain 4-46) protein is Elongation factor P.